We begin with the raw amino-acid sequence, 258 residues long: Pimeloyl-[acyl-carrier protein] methyl ester esterase (258 aa).

Residues L16–E244 enclose the AB hydrolase-1 domain. Residues W22, S82–L83, and F146–Q150 each bind substrate. S82 functions as the Nucleophile in the catalytic mechanism. Residues D210 and H238 contribute to the active site. H238 is a substrate binding site.

This sequence belongs to the AB hydrolase superfamily. Carboxylesterase BioH family. Monomer.

It is found in the cytoplasm. It carries out the reaction 6-carboxyhexanoyl-[ACP] methyl ester + H2O = 6-carboxyhexanoyl-[ACP] + methanol + H(+). It functions in the pathway cofactor biosynthesis; biotin biosynthesis. Functionally, the physiological role of BioH is to remove the methyl group introduced by BioC when the pimeloyl moiety is complete. It allows to synthesize pimeloyl-ACP via the fatty acid synthetic pathway through the hydrolysis of the ester bonds of pimeloyl-ACP esters. The sequence is that of Pimeloyl-[acyl-carrier protein] methyl ester esterase from Vibrio atlanticus (strain LGP32) (Vibrio splendidus (strain Mel32)).